Consider the following 93-residue polypeptide: Alpha-defensin 26 (93 aa).

Residues 1–19 (MKTLVLLSALFLLAFQVQA) form the signal peptide. A propeptide spanning residues 20–58 (DPIQNTDEETNTEVQPQEEDQAVSVSFGNPEGSDLQEES) is cleaved from the precursor. Residues 24–55 (NTDEETNTEVQPQEEDQAVSVSFGNPEGSDLQ) are disordered. A compositionally biased stretch (acidic residues) spans 25 to 40 (TDEETNTEVQPQEEDQ). 3 cysteine pairs are disulfide-bonded: Cys-64/Cys-92, Cys-66/Cys-81, and Cys-71/Cys-91.

This sequence belongs to the alpha-defensin family.

It localises to the secreted. May have microbicidal activities. The sequence is that of Alpha-defensin 26 (Defa26) from Mus musculus (Mouse).